Reading from the N-terminus, the 58-residue chain is UPF0509 protein YciZ (58 aa).

The protein belongs to the UPF0509 family.

The chain is UPF0509 protein YciZ from Escherichia fergusonii (strain ATCC 35469 / DSM 13698 / CCUG 18766 / IAM 14443 / JCM 21226 / LMG 7866 / NBRC 102419 / NCTC 12128 / CDC 0568-73).